Consider the following 507-residue polypeptide: ATP synthase subunit alpha, chloroplastic (507 aa).

170–177 (GDRQTGKT) provides a ligand contact to ATP. T257 is subject to Phosphothreonine.

The protein belongs to the ATPase alpha/beta chains family. As to quaternary structure, F-type ATPases have 2 components, CF(1) - the catalytic core - and CF(0) - the membrane proton channel. CF(1) has five subunits: alpha(3), beta(3), gamma(1), delta(1), epsilon(1). CF(0) has four main subunits: a, b, b' and c.

It localises to the plastid. The protein localises to the chloroplast thylakoid membrane. It catalyses the reaction ATP + H2O + 4 H(+)(in) = ADP + phosphate + 5 H(+)(out). In terms of biological role, produces ATP from ADP in the presence of a proton gradient across the membrane. The alpha chain is a regulatory subunit. The polypeptide is ATP synthase subunit alpha, chloroplastic (Lobularia maritima (Sweet alyssum)).